We begin with the raw amino-acid sequence, 185 residues long: Ribosome-recycling factor (185 aa).

This sequence belongs to the RRF family.

Its subcellular location is the cytoplasm. Responsible for the release of ribosomes from messenger RNA at the termination of protein biosynthesis. May increase the efficiency of translation by recycling ribosomes from one round of translation to another. The sequence is that of Ribosome-recycling factor from Mycobacterium avium (strain 104).